The sequence spans 242 residues: UPF0157 protein PA4798 (242 aa).

Residues 215–242 (AGAESTPGGPADTAYFESLRSRVSKPQD) are disordered.

Belongs to the UPF0157 (GrpB) family.

The polypeptide is UPF0157 protein PA4798 (Pseudomonas aeruginosa (strain ATCC 15692 / DSM 22644 / CIP 104116 / JCM 14847 / LMG 12228 / 1C / PRS 101 / PAO1)).